The chain runs to 270 residues: Bis(5'-nucleosyl)-tetraphosphatase, symmetrical (270 aa).

This sequence belongs to the Ap4A hydrolase family.

The enzyme catalyses P(1),P(4)-bis(5'-adenosyl) tetraphosphate + H2O = 2 ADP + 2 H(+). In terms of biological role, hydrolyzes diadenosine 5',5'''-P1,P4-tetraphosphate to yield ADP. This is Bis(5'-nucleosyl)-tetraphosphatase, symmetrical from Haemophilus ducreyi (strain 35000HP / ATCC 700724).